The chain runs to 157 residues: MELQLRDHTEGKLQPSQERLAEKALAQAAERLDVPEQAEMSLTFVLNPEIRELNRDYRGIDRATDVISFAIEDDDDLANLPAEIRAELPVELGDLVISIDKVTEQALFLNHSADRELGYLLVHGFLHLNGYDHEEPADEEKMFTLQEEILDGLGLSR.

His-123, His-127, and His-133 together coordinate Zn(2+).

The protein belongs to the endoribonuclease YbeY family. Zn(2+) is required as a cofactor.

It localises to the cytoplasm. Functionally, single strand-specific metallo-endoribonuclease involved in late-stage 70S ribosome quality control and in maturation of the 3' terminus of the 16S rRNA. In Limosilactobacillus fermentum (strain NBRC 3956 / LMG 18251) (Lactobacillus fermentum), this protein is Endoribonuclease YbeY.